A 149-amino-acid chain; its full sequence is Large ribosomal subunit protein bL9 (149 aa).

This sequence belongs to the bacterial ribosomal protein bL9 family.

Binds to the 23S rRNA. The chain is Large ribosomal subunit protein bL9 from Laribacter hongkongensis (strain HLHK9).